A 467-amino-acid polypeptide reads, in one-letter code: D-hydantoinase (467 aa).

Residues histidine 65, histidine 67, and lysine 156 each coordinate Zn(2+). Lysine 156 is subject to N6-carboxylysine. Tyrosine 161 provides a ligand contact to substrate. Residues histidine 189 and histidine 245 each coordinate Zn(2+). Serine 294 contacts substrate. Residue aspartate 321 participates in Zn(2+) binding. Asparagine 343 contacts substrate.

It belongs to the metallo-dependent hydrolases superfamily. Hydantoinase/dihydropyrimidinase family. In terms of assembly, homotetramer. The cofactor is Zn(2+). Post-translationally, carboxylation allows a single lysine to coordinate two zinc ions.

In terms of biological role, catalyzes the stereospecific hydrolysis of the cyclic amide bond of D-hydantoin derivatives. The protein is D-hydantoinase (hyuA) of Streptomyces coelicolor (strain ATCC BAA-471 / A3(2) / M145).